A 71-amino-acid polypeptide reads, in one-letter code: Small ribosomal subunit protein bS21 (71 aa).

Basic residues predominate over residues 49–59 (AAAAVKRHAKK). The tract at residues 49-71 (AAAAVKRHAKKVQREQRRSVRLY) is disordered. Positions 60-71 (VQREQRRSVRLY) are enriched in basic and acidic residues.

This sequence belongs to the bacterial ribosomal protein bS21 family.

This Stutzerimonas stutzeri (strain A1501) (Pseudomonas stutzeri) protein is Small ribosomal subunit protein bS21.